The primary structure comprises 321 residues: Olfactory receptor 52P1 (321 aa).

The Extracellular segment spans residues 1-27 (MESPNHTDVDPSVFFLLGIPGLEQFHL). A glycan (N-linked (GlcNAc...) asparagine) is linked at Asn-5. A helical transmembrane segment spans residues 28–48 (WLSLPVCGLGTATIVGNITIL). Residues 49–56 (VVVATEPV) are Cytoplasmic-facing. The helical transmembrane segment at 57–77 (LHKPVYLFLCMLSTIDLAASV) threads the bilayer. Topologically, residues 78–101 (STVPKLLAIFWCGAGHISASACLA) are extracellular. Residues Cys-99 and Cys-191 are joined by a disulfide bond. A helical membrane pass occupies residues 102-122 (QMFFIHAFCMMESTVLLAMAF). Topologically, residues 123–141 (DRYVAICHPLRYATILTDT) are cytoplasmic. The chain crosses the membrane as a helical span at residues 142-162 (IIAHIGVAAVVRGSLLMLPCP). Topologically, residues 163-198 (FLIGRLNFCQSHVILHTYCEHMAVVKLACGDTRPNR) are extracellular. Residues 199 to 219 (VYGLTAALLVIGVDLFCIGLS) traverse the membrane as a helical segment. The Cytoplasmic portion of the chain corresponds to 220-239 (YALSAQAVLRLSSHEARSKA). Residues 240-260 (LGTCGSHVCVILISYTPALFS) traverse the membrane as a helical segment. At 261–275 (FFTHRFGHHVPVHIH) the chain is on the extracellular side. The chain crosses the membrane as a helical span at residues 276–296 (ILLANVYLLLPPALNPVVYGV). At 297–315 (KTKQIRKRVVRVFQSGQGM) the chain is on the cytoplasmic side.

The protein belongs to the G-protein coupled receptor 1 family.

The protein localises to the cell membrane. In terms of biological role, odorant receptor. The polypeptide is Olfactory receptor 52P1 (Homo sapiens (Human)).